Here is a 635-residue protein sequence, read N- to C-terminus: Biosynthetic arginine decarboxylase (635 aa).

Residue Lys100 is modified to N6-(pyridoxal phosphate)lysine. Leu282–Tyr292 contacts substrate.

It belongs to the Orn/Lys/Arg decarboxylase class-II family. SpeA subfamily. The cofactor is Mg(2+). Requires pyridoxal 5'-phosphate as cofactor.

It catalyses the reaction L-arginine + H(+) = agmatine + CO2. It functions in the pathway amine and polyamine biosynthesis; agmatine biosynthesis; agmatine from L-arginine: step 1/1. Its function is as follows. Catalyzes the biosynthesis of agmatine from arginine. This Trichlorobacter lovleyi (strain ATCC BAA-1151 / DSM 17278 / SZ) (Geobacter lovleyi) protein is Biosynthetic arginine decarboxylase.